The following is a 341-amino-acid chain: Phosphoribosylformylglycinamidine cyclo-ligase (341 aa).

Belongs to the AIR synthase family.

Its subcellular location is the cytoplasm. It catalyses the reaction 2-formamido-N(1)-(5-O-phospho-beta-D-ribosyl)acetamidine + ATP = 5-amino-1-(5-phospho-beta-D-ribosyl)imidazole + ADP + phosphate + H(+). It functions in the pathway purine metabolism; IMP biosynthesis via de novo pathway; 5-amino-1-(5-phospho-D-ribosyl)imidazole from N(2)-formyl-N(1)-(5-phospho-D-ribosyl)glycinamide: step 2/2. The chain is Phosphoribosylformylglycinamidine cyclo-ligase from Caldicellulosiruptor saccharolyticus (strain ATCC 43494 / DSM 8903 / Tp8T 6331).